A 447-amino-acid polypeptide reads, in one-letter code: Exodeoxyribonuclease 7 large subunit (447 aa).

This sequence belongs to the XseA family. As to quaternary structure, heterooligomer composed of large and small subunits.

The protein localises to the cytoplasm. The catalysed reaction is Exonucleolytic cleavage in either 5'- to 3'- or 3'- to 5'-direction to yield nucleoside 5'-phosphates.. In terms of biological role, bidirectionally degrades single-stranded DNA into large acid-insoluble oligonucleotides, which are then degraded further into small acid-soluble oligonucleotides. The chain is Exodeoxyribonuclease 7 large subunit from Geobacter sulfurreducens (strain ATCC 51573 / DSM 12127 / PCA).